Here is a 252-residue protein sequence, read N- to C-terminus: Small ribosomal subunit protein uS2 (252 aa).

Belongs to the universal ribosomal protein uS2 family.

This chain is Small ribosomal subunit protein uS2, found in Ruminiclostridium cellulolyticum (strain ATCC 35319 / DSM 5812 / JCM 6584 / H10) (Clostridium cellulolyticum).